A 149-amino-acid polypeptide reads, in one-letter code: Large ribosomal subunit protein uL16 (149 aa).

Belongs to the universal ribosomal protein uL16 family. Part of the 50S ribosomal subunit.

Binds 23S rRNA and is also seen to make contacts with the A and possibly P site tRNAs. The protein is Large ribosomal subunit protein uL16 of Dehalococcoides mccartyi (strain ATCC BAA-2100 / JCM 16839 / KCTC 5957 / BAV1).